A 152-amino-acid polypeptide reads, in one-letter code: Transcriptional repressor NrdR (152 aa).

Residues 3-34 (CCYCGHGESKVLETRSAEEGRVIRRRRECMEC) fold into a zinc finger. The 91-residue stretch at 49–139 (LIVRKKGGSL…VYRQFTDVGR (91 aa)) folds into the ATP-cone domain.

It belongs to the NrdR family. The cofactor is Zn(2+).

Negatively regulates transcription of bacterial ribonucleotide reductase nrd genes and operons by binding to NrdR-boxes. This is Transcriptional repressor NrdR from Heliobacterium modesticaldum (strain ATCC 51547 / Ice1).